Consider the following 216-residue polypeptide: ATP phosphoribosyltransferase (216 aa).

It belongs to the ATP phosphoribosyltransferase family. Short subfamily. In terms of assembly, heteromultimer composed of HisG and HisZ subunits.

It is found in the cytoplasm. It catalyses the reaction 1-(5-phospho-beta-D-ribosyl)-ATP + diphosphate = 5-phospho-alpha-D-ribose 1-diphosphate + ATP. It participates in amino-acid biosynthesis; L-histidine biosynthesis; L-histidine from 5-phospho-alpha-D-ribose 1-diphosphate: step 1/9. Its function is as follows. Catalyzes the condensation of ATP and 5-phosphoribose 1-diphosphate to form N'-(5'-phosphoribosyl)-ATP (PR-ATP). Has a crucial role in the pathway because the rate of histidine biosynthesis seems to be controlled primarily by regulation of HisG enzymatic activity. In Thiobacillus denitrificans (strain ATCC 25259 / T1), this protein is ATP phosphoribosyltransferase.